The primary structure comprises 312 residues: Olfactory receptor-like protein COR4 (312 aa).

Residues 1 to 26 (MASGNCTTPTTFILSGLTDNPGLQMP) lie on the Extracellular side of the membrane. Residue Asn-5 is glycosylated (N-linked (GlcNAc...) asparagine). A helical membrane pass occupies residues 27 to 49 (LFMVFLAIYTITLLTNLGLIALI). Over 50-57 (SVDLHLQT) the chain is Cytoplasmic. The helical transmembrane segment at 58-79 (PMYIFLQNLSFTDAAYSTVITP) threads the bilayer. Residues 80 to 100 (KMLATFLEERKTISYIGCILQ) are Extracellular-facing. Cys-97 and Cys-179 form a disulfide bridge. Residues 101-120 (YFSFVLLTVTESLLLAVMAY) traverse the membrane as a helical segment. The Cytoplasmic segment spans residues 121-139 (DRYVAICKPLLYPSIMTKA). Residues 140–164 (VCWRLVKGLYSLAFLNSLVHTSGLL) form a helical membrane-spanning segment. Over 165-205 (KLSFCSSNVVNHFFCDNSPLFQISSSSTTLNELLVFIFGSL) the chain is Extracellular. A helical membrane pass occupies residues 206–226 (FAMSSIITILISYVFIILTVV). Topologically, residues 227–239 (RIRSKDGKYKAFS) are cytoplasmic. A helical membrane pass occupies residues 240–260 (TCTSHLMAVSLFHGTVIFMYL). At 261–271 (RPVKLFSLDTD) the chain is on the extracellular side. The helical transmembrane segment at 272–292 (KIASLFYTVVIPMLNPLIYSW) threads the bilayer. Residues 293-312 (RNKEVKDALRRVIATNVWIH) are Cytoplasmic-facing.

It belongs to the G-protein coupled receptor 1 family.

It is found in the cell membrane. Functionally, odorant receptor. The polypeptide is Olfactory receptor-like protein COR4 (COR4) (Gallus gallus (Chicken)).